A 337-amino-acid polypeptide reads, in one-letter code: Glycerol-3-phosphate dehydrogenase [NAD(P)+] (337 aa).

Ser-11, Trp-12, Arg-32, and Lys-109 together coordinate NADPH. Residues Lys-109, Gly-140, and Ser-142 each contribute to the sn-glycerol 3-phosphate site. Ala-144 is an NADPH binding site. Lys-195, Asp-248, Ser-258, Arg-259, and Asn-260 together coordinate sn-glycerol 3-phosphate. Lys-195 functions as the Proton acceptor in the catalytic mechanism. An NADPH-binding site is contributed by Arg-259. Residues Val-283 and Glu-285 each contribute to the NADPH site.

Belongs to the NAD-dependent glycerol-3-phosphate dehydrogenase family.

The protein localises to the cytoplasm. The catalysed reaction is sn-glycerol 3-phosphate + NAD(+) = dihydroxyacetone phosphate + NADH + H(+). It catalyses the reaction sn-glycerol 3-phosphate + NADP(+) = dihydroxyacetone phosphate + NADPH + H(+). The protein operates within membrane lipid metabolism; glycerophospholipid metabolism. Its function is as follows. Catalyzes the reduction of the glycolytic intermediate dihydroxyacetone phosphate (DHAP) to sn-glycerol 3-phosphate (G3P), the key precursor for phospholipid synthesis. The chain is Glycerol-3-phosphate dehydrogenase [NAD(P)+] from Limosilactobacillus fermentum (strain NBRC 3956 / LMG 18251) (Lactobacillus fermentum).